The sequence spans 290 residues: Fructose-1,6-bisphosphatase class 1 (290 aa).

Mg(2+) contacts are provided by Glu78, Asp96, Leu98, and Asp99. Residues 99–102 (DGSS), Tyr201, and Lys226 each bind substrate. Residue Glu232 participates in Mg(2+) binding.

It belongs to the FBPase class 1 family. In terms of assembly, homotetramer. Requires Mg(2+) as cofactor.

The protein localises to the cytoplasm. It catalyses the reaction beta-D-fructose 1,6-bisphosphate + H2O = beta-D-fructose 6-phosphate + phosphate. The protein operates within carbohydrate biosynthesis; gluconeogenesis. The protein is Fructose-1,6-bisphosphatase class 1 of Helicobacter pylori (strain HPAG1).